The following is a 317-amino-acid chain: Dehydrogenase/reductase SDR family member 12 (317 aa).

Residues Ser50 and Ile52 each contribute to the NAD(+) site. Ser175 is a binding site for substrate. NAD(+) is bound by residues Tyr201, Lys205, and Thr234. Residue Tyr201 is the Proton acceptor of the active site.

Belongs to the short-chain dehydrogenases/reductases (SDR) family.

Functionally, putative oxidoreductase. This is Dehydrogenase/reductase SDR family member 12 (DHRS12) from Bos taurus (Bovine).